The sequence spans 874 residues: Cellulose synthase catalytic subunit [UDP-forming] (874 aa).

4 helical membrane-spanning segments follow: residues 30 to 50 (SPFS…VFPL), 151 to 171 (ILGV…TQPF), 173 to 193 (PLSQ…VRRM), and 230 to 250 (LVCG…LVLG). Residues 271–364 (QWPTVDIFVP…FVAIFDCDHV (94 aa)) are catalytic subdomain A. Asp-313 is a catalytic residue. 2 residues coordinate substrate: Asp-360 and Asp-362. Positions 441-501 (KPLDEIGGIA…GQRIRWARGM (61 aa)) are catalytic subdomain B. Asp-457 is a catalytic residue. Transmembrane regions (helical) follow at residues 525–545 (LNAM…TAPL), 547–567 (FLLL…LFVI), 592–612 (IYET…LINP), 634–654 (VISR…AAGV), and 668–688 (VIVS…AVAV). The PilZ domain maps to 694-790 (QVRRAHRVEI…QHIDFVQCTF (97 aa)). A helical transmembrane segment spans residues 833–853 (SVKVIFRSLTALIAWIVSFIP).

Belongs to the glycosyltransferase 2 family. Requires Mg(2+) as cofactor.

It is found in the cell inner membrane. It catalyses the reaction [(1-&gt;4)-beta-D-glucosyl](n) + UDP-alpha-D-glucose = [(1-&gt;4)-beta-D-glucosyl](n+1) + UDP + H(+). It participates in glycan metabolism; bacterial cellulose biosynthesis. Activated by bis-(3'-5') cyclic diguanylic acid (c-di-GMP). Its function is as follows. Catalytic subunit of cellulose synthase. It polymerizes uridine 5'-diphosphate glucose to cellulose, which is produced as an extracellular component for mechanical and chemical protection at the onset of the stationary phase, when the cells exhibit multicellular behavior (rdar morphotype). Coexpression of cellulose and thin aggregative fimbriae leads to a hydrophobic network with tightly packed cells embedded in a highly inert matrix. This Salmonella typhimurium (strain LT2 / SGSC1412 / ATCC 700720) protein is Cellulose synthase catalytic subunit [UDP-forming] (bcsA).